Here is a 234-residue protein sequence, read N- to C-terminus: 2-C-methyl-D-erythritol 4-phosphate cytidylyltransferase (234 aa).

The protein belongs to the IspD/TarI cytidylyltransferase family. IspD subfamily.

It carries out the reaction 2-C-methyl-D-erythritol 4-phosphate + CTP + H(+) = 4-CDP-2-C-methyl-D-erythritol + diphosphate. It participates in isoprenoid biosynthesis; isopentenyl diphosphate biosynthesis via DXP pathway; isopentenyl diphosphate from 1-deoxy-D-xylulose 5-phosphate: step 2/6. In terms of biological role, catalyzes the formation of 4-diphosphocytidyl-2-C-methyl-D-erythritol from CTP and 2-C-methyl-D-erythritol 4-phosphate (MEP). This chain is 2-C-methyl-D-erythritol 4-phosphate cytidylyltransferase, found in Photobacterium profundum (strain SS9).